A 190-amino-acid chain; its full sequence is Crossover junction endodeoxyribonuclease RuvC (190 aa).

Active-site residues include D8, E67, and D139. D8, E67, and D139 together coordinate Mg(2+).

It belongs to the RuvC family. In terms of assembly, homodimer which binds Holliday junction (HJ) DNA. The HJ becomes 2-fold symmetrical on binding to RuvC with unstacked arms; it has a different conformation from HJ DNA in complex with RuvA. In the full resolvosome a probable DNA-RuvA(4)-RuvB(12)-RuvC(2) complex forms which resolves the HJ. Requires Mg(2+) as cofactor.

The protein localises to the cytoplasm. The catalysed reaction is Endonucleolytic cleavage at a junction such as a reciprocal single-stranded crossover between two homologous DNA duplexes (Holliday junction).. Its function is as follows. The RuvA-RuvB-RuvC complex processes Holliday junction (HJ) DNA during genetic recombination and DNA repair. Endonuclease that resolves HJ intermediates. Cleaves cruciform DNA by making single-stranded nicks across the HJ at symmetrical positions within the homologous arms, yielding a 5'-phosphate and a 3'-hydroxyl group; requires a central core of homology in the junction. The consensus cleavage sequence is 5'-(A/T)TT(C/G)-3'. Cleavage occurs on the 3'-side of the TT dinucleotide at the point of strand exchange. HJ branch migration catalyzed by RuvA-RuvB allows RuvC to scan DNA until it finds its consensus sequence, where it cleaves and resolves the cruciform DNA. This is Crossover junction endodeoxyribonuclease RuvC from Haemophilus influenzae (strain PittEE).